We begin with the raw amino-acid sequence, 94 residues long: Aspartyl/glutamyl-tRNA(Asn/Gln) amidotransferase subunit C (94 aa).

The protein belongs to the GatC family. In terms of assembly, heterotrimer of A, B and C subunits.

The catalysed reaction is L-glutamyl-tRNA(Gln) + L-glutamine + ATP + H2O = L-glutaminyl-tRNA(Gln) + L-glutamate + ADP + phosphate + H(+). It carries out the reaction L-aspartyl-tRNA(Asn) + L-glutamine + ATP + H2O = L-asparaginyl-tRNA(Asn) + L-glutamate + ADP + phosphate + 2 H(+). In terms of biological role, allows the formation of correctly charged Asn-tRNA(Asn) or Gln-tRNA(Gln) through the transamidation of misacylated Asp-tRNA(Asn) or Glu-tRNA(Gln) in organisms which lack either or both of asparaginyl-tRNA or glutaminyl-tRNA synthetases. The reaction takes place in the presence of glutamine and ATP through an activated phospho-Asp-tRNA(Asn) or phospho-Glu-tRNA(Gln). The sequence is that of Aspartyl/glutamyl-tRNA(Asn/Gln) amidotransferase subunit C from Caldicellulosiruptor bescii (strain ATCC BAA-1888 / DSM 6725 / KCTC 15123 / Z-1320) (Anaerocellum thermophilum).